The following is a 271-amino-acid chain: Diaminopimelate epimerase (271 aa).

Positions 13, 46, and 66 each coordinate substrate. Cysteine 75 functions as the Proton donor in the catalytic mechanism. Substrate contacts are provided by residues 76–77 (GN), asparagine 155, asparagine 188, and 206–207 (ER). Residue cysteine 215 is the Proton acceptor of the active site. 216 to 217 (GS) contributes to the substrate binding site.

Belongs to the diaminopimelate epimerase family. As to quaternary structure, homodimer.

The protein resides in the cytoplasm. It carries out the reaction (2S,6S)-2,6-diaminopimelate = meso-2,6-diaminopimelate. It participates in amino-acid biosynthesis; L-lysine biosynthesis via DAP pathway; DL-2,6-diaminopimelate from LL-2,6-diaminopimelate: step 1/1. Functionally, catalyzes the stereoinversion of LL-2,6-diaminopimelate (L,L-DAP) to meso-diaminopimelate (meso-DAP), a precursor of L-lysine and an essential component of the bacterial peptidoglycan. The polypeptide is Diaminopimelate epimerase (Vesicomyosocius okutanii subsp. Calyptogena okutanii (strain HA)).